Consider the following 418-residue polypeptide: Serine hydroxymethyltransferase (418 aa).

Residues Leu-121 and 125-127 each bind (6S)-5,6,7,8-tetrahydrofolate; that span reads GHL. At Lys-230 the chain carries N6-(pyridoxal phosphate)lysine. (6S)-5,6,7,8-tetrahydrofolate-binding positions include Glu-246 and 355 to 357; that span reads SPF.

Belongs to the SHMT family. As to quaternary structure, homodimer. Pyridoxal 5'-phosphate serves as cofactor.

The protein localises to the cytoplasm. The enzyme catalyses (6R)-5,10-methylene-5,6,7,8-tetrahydrofolate + glycine + H2O = (6S)-5,6,7,8-tetrahydrofolate + L-serine. It participates in one-carbon metabolism; tetrahydrofolate interconversion. It functions in the pathway amino-acid biosynthesis; glycine biosynthesis; glycine from L-serine: step 1/1. Functionally, catalyzes the reversible interconversion of serine and glycine with tetrahydrofolate (THF) serving as the one-carbon carrier. This reaction serves as the major source of one-carbon groups required for the biosynthesis of purines, thymidylate, methionine, and other important biomolecules. Also exhibits THF-independent aldolase activity toward beta-hydroxyamino acids, producing glycine and aldehydes, via a retro-aldol mechanism. The protein is Serine hydroxymethyltransferase of Streptococcus pneumoniae (strain ATCC 700669 / Spain 23F-1).